Reading from the N-terminus, the 1342-residue chain is DNA-directed RNA polymerase subunit beta (1342 aa).

Belongs to the RNA polymerase beta chain family. As to quaternary structure, the RNAP catalytic core consists of 2 alpha, 1 beta, 1 beta' and 1 omega subunit. When a sigma factor is associated with the core the holoenzyme is formed, which can initiate transcription.

It carries out the reaction RNA(n) + a ribonucleoside 5'-triphosphate = RNA(n+1) + diphosphate. Functionally, DNA-dependent RNA polymerase catalyzes the transcription of DNA into RNA using the four ribonucleoside triphosphates as substrates. The protein is DNA-directed RNA polymerase subunit beta of Salmonella agona (strain SL483).